A 62-amino-acid chain; its full sequence is MTIAFQLAVFASIAIPFILVIGVPVVLASPDGWSSSRNVVFSGASSWIGLVFLVGILNSLIS.

A run of 2 helical transmembrane segments spans residues 8 to 28 and 41 to 61; these read AVFA…VVLA and FSGA…NSLI.

Belongs to the PsbZ family. As to quaternary structure, PSII is composed of 1 copy each of membrane proteins PsbA, PsbB, PsbC, PsbD, PsbE, PsbF, PsbH, PsbI, PsbJ, PsbK, PsbL, PsbM, PsbT, PsbY, PsbZ, Psb30/Ycf12, at least 3 peripheral proteins of the oxygen-evolving complex and a large number of cofactors. It forms dimeric complexes.

It localises to the plastid. The protein resides in the chloroplast thylakoid membrane. Functionally, may control the interaction of photosystem II (PSII) cores with the light-harvesting antenna, regulates electron flow through the 2 photosystem reaction centers. PSII is a light-driven water plastoquinone oxidoreductase, using light energy to abstract electrons from H(2)O, generating a proton gradient subsequently used for ATP formation. The polypeptide is Photosystem II reaction center protein Z (Huperzia lucidula (Shining clubmoss)).